The primary structure comprises 371 residues: Queuine tRNA-ribosyltransferase (371 aa).

Residue Asp-90 is the Proton acceptor of the active site. Substrate-binding positions include 90 to 94 (DSGGF), Asp-144, Gln-188, and Gly-215. An RNA binding region spans residues 246-252 (GVGTPED). Asp-265 acts as the Nucleophile in catalysis. An RNA binding; important for wobble base 34 recognition region spans residues 270–274 (TRNAR). Residues Cys-303, Cys-305, Cys-308, and His-334 each coordinate Zn(2+).

This sequence belongs to the queuine tRNA-ribosyltransferase family. As to quaternary structure, homodimer. Within each dimer, one monomer is responsible for RNA recognition and catalysis, while the other monomer binds to the replacement base PreQ1. Zn(2+) serves as cofactor.

The enzyme catalyses 7-aminomethyl-7-carbaguanine + guanosine(34) in tRNA = 7-aminomethyl-7-carbaguanosine(34) in tRNA + guanine. It participates in tRNA modification; tRNA-queuosine biosynthesis. In terms of biological role, catalyzes the base-exchange of a guanine (G) residue with the queuine precursor 7-aminomethyl-7-deazaguanine (PreQ1) at position 34 (anticodon wobble position) in tRNAs with GU(N) anticodons (tRNA-Asp, -Asn, -His and -Tyr). Catalysis occurs through a double-displacement mechanism. The nucleophile active site attacks the C1' of nucleotide 34 to detach the guanine base from the RNA, forming a covalent enzyme-RNA intermediate. The proton acceptor active site deprotonates the incoming PreQ1, allowing a nucleophilic attack on the C1' of the ribose to form the product. After dissociation, two additional enzymatic reactions on the tRNA convert PreQ1 to queuine (Q), resulting in the hypermodified nucleoside queuosine (7-(((4,5-cis-dihydroxy-2-cyclopenten-1-yl)amino)methyl)-7-deazaguanosine). The sequence is that of Queuine tRNA-ribosyltransferase from Neisseria meningitidis serogroup B (strain ATCC BAA-335 / MC58).